The chain runs to 108 residues: Small ribosomal subunit protein bS18c (108 aa).

Composition is skewed to basic residues over residues 1 to 19 (MDKS…RRRL) and 97 to 108 (RARKKKIGLLLN). Disordered stretches follow at residues 1 to 23 (MDKS…PPIG) and 83 to 108 (QFER…LLLN).

This sequence belongs to the bacterial ribosomal protein bS18 family. In terms of assembly, part of the 30S ribosomal subunit.

Its subcellular location is the plastid. The protein resides in the chloroplast. This Illicium oligandrum (Star anise) protein is Small ribosomal subunit protein bS18c.